A 284-amino-acid polypeptide reads, in one-letter code: Bifunctional protein FolD (284 aa).

NADP(+)-binding positions include 164-166 (GRS) and Ser189.

Belongs to the tetrahydrofolate dehydrogenase/cyclohydrolase family. As to quaternary structure, homodimer.

The catalysed reaction is (6R)-5,10-methylene-5,6,7,8-tetrahydrofolate + NADP(+) = (6R)-5,10-methenyltetrahydrofolate + NADPH. It catalyses the reaction (6R)-5,10-methenyltetrahydrofolate + H2O = (6R)-10-formyltetrahydrofolate + H(+). It participates in one-carbon metabolism; tetrahydrofolate interconversion. Its function is as follows. Catalyzes the oxidation of 5,10-methylenetetrahydrofolate to 5,10-methenyltetrahydrofolate and then the hydrolysis of 5,10-methenyltetrahydrofolate to 10-formyltetrahydrofolate. This Listeria welshimeri serovar 6b (strain ATCC 35897 / DSM 20650 / CCUG 15529 / CIP 8149 / NCTC 11857 / SLCC 5334 / V8) protein is Bifunctional protein FolD.